We begin with the raw amino-acid sequence, 230 residues long: Type II restriction enzyme Eco47I (230 aa).

It catalyses the reaction Endonucleolytic cleavage of DNA to give specific double-stranded fragments with terminal 5'-phosphates.. Functionally, a P subtype restriction enzyme that recognizes the double-stranded sequence 5'-GGWCC-3' and cleaves after G-1. The protein is Type II restriction enzyme Eco47I of Escherichia coli.